Here is a 276-residue protein sequence, read N- to C-terminus: Small ribosomal subunit protein uS2 (276 aa).

The tract at residues 226-276 (KKAREERQLAAAREAAGEPKSEDAPAEAAATEEAPATEAPAAEAQQENAAE) is disordered. A compositionally biased stretch (low complexity) spans 251-276 (AEAAATEEAPATEAPAAEAQQENAAE).

Belongs to the universal ribosomal protein uS2 family.

This is Small ribosomal subunit protein uS2 from Corynebacterium efficiens (strain DSM 44549 / YS-314 / AJ 12310 / JCM 11189 / NBRC 100395).